The primary structure comprises 154 residues: NADPH-dependent 7-cyano-7-deazaguanine reductase (154 aa).

The active-site Thioimide intermediate is C52. D59 functions as the Proton donor in the catalytic mechanism. Substrate contacts are provided by residues 74–76 (VES) and 93–94 (HE).

Belongs to the GTP cyclohydrolase I family. QueF type 1 subfamily.

It localises to the cytoplasm. It catalyses the reaction 7-aminomethyl-7-carbaguanine + 2 NADP(+) = 7-cyano-7-deazaguanine + 2 NADPH + 3 H(+). The protein operates within tRNA modification; tRNA-queuosine biosynthesis. In terms of biological role, catalyzes the NADPH-dependent reduction of 7-cyano-7-deazaguanine (preQ0) to 7-aminomethyl-7-deazaguanine (preQ1). This Sinorhizobium medicae (strain WSM419) (Ensifer medicae) protein is NADPH-dependent 7-cyano-7-deazaguanine reductase.